The following is a 290-amino-acid chain: 33 kDa chaperonin (290 aa).

2 disulfides stabilise this stretch: C235–C237 and C268–C271.

This sequence belongs to the HSP33 family. In terms of processing, under oxidizing conditions two disulfide bonds are formed involving the reactive cysteines. Under reducing conditions zinc is bound to the reactive cysteines and the protein is inactive.

It is found in the cytoplasm. Redox regulated molecular chaperone. Protects both thermally unfolding and oxidatively damaged proteins from irreversible aggregation. Plays an important role in the bacterial defense system toward oxidative stress. The polypeptide is 33 kDa chaperonin (Streptococcus pyogenes serotype M49 (strain NZ131)).